Consider the following 184-residue polypeptide: ATP synthase subunit b, chloroplastic (184 aa).

The chain crosses the membrane as a helical span at residues 27–49; that stretch reads LATNLINLSVVLGVLIFFGKGVL.

It belongs to the ATPase B chain family. In terms of assembly, F-type ATPases have 2 components, F(1) - the catalytic core - and F(0) - the membrane proton channel. F(1) has five subunits: alpha(3), beta(3), gamma(1), delta(1), epsilon(1). F(0) has four main subunits: a(1), b(1), b'(1) and c(10-14). The alpha and beta chains form an alternating ring which encloses part of the gamma chain. F(1) is attached to F(0) by a central stalk formed by the gamma and epsilon chains, while a peripheral stalk is formed by the delta, b and b' chains.

It is found in the plastid. Its subcellular location is the chloroplast thylakoid membrane. In terms of biological role, f(1)F(0) ATP synthase produces ATP from ADP in the presence of a proton or sodium gradient. F-type ATPases consist of two structural domains, F(1) containing the extramembraneous catalytic core and F(0) containing the membrane proton channel, linked together by a central stalk and a peripheral stalk. During catalysis, ATP synthesis in the catalytic domain of F(1) is coupled via a rotary mechanism of the central stalk subunits to proton translocation. Component of the F(0) channel, it forms part of the peripheral stalk, linking F(1) to F(0). This chain is ATP synthase subunit b, chloroplastic, found in Lactuca sativa (Garden lettuce).